A 498-amino-acid chain; its full sequence is Lysine--tRNA ligase (498 aa).

2 residues coordinate Mg(2+): E409 and E416.

Belongs to the class-II aminoacyl-tRNA synthetase family. Homodimer. Mg(2+) serves as cofactor.

It is found in the cytoplasm. The enzyme catalyses tRNA(Lys) + L-lysine + ATP = L-lysyl-tRNA(Lys) + AMP + diphosphate. This Dichelobacter nodosus (strain VCS1703A) protein is Lysine--tRNA ligase.